Here is a 788-residue protein sequence, read N- to C-terminus: Protein FAR1-RELATED SEQUENCE 5 (788 aa).

The FAR1 domain maps to 87-179 (AFYNSYARRI…VKDHNHELVP (93 aa)). The MULE domain occupies 299 to 395 (TVTFDTTYRS…CKWHILKKCQ (97 aa)). The SWIM-type zinc-finger motif lies at 584–616 (FNVLEMRANCSCQMFEFSGIICRHILAVFRVTN). A disordered region spans residues 713 to 733 (SSVTGGKHQQEVLAQPEPEDE). Residues 731-768 (EDEMDKKINQLRNELELANRKCEAYRTNLLSVLKEMED) adopt a coiled-coil conformation.

Belongs to the FHY3/FAR1 family. Expressed in hypocotyls, rosette and cauline leaves, inflorescences stems, flowers and siliques.

It localises to the nucleus. Putative transcription activator involved in regulating light control of development. The protein is Protein FAR1-RELATED SEQUENCE 5 (FRS5) of Arabidopsis thaliana (Mouse-ear cress).